The chain runs to 358 residues: tRNA-specific 2-thiouridylase MnmA (358 aa).

ATP is bound by residues 6–13 (ALSGGVDS) and methionine 32. The active-site Nucleophile is cysteine 103. A disulfide bridge links cysteine 103 with cysteine 201. Glycine 127 is an ATP binding site. The interval 151 to 153 (KDQ) is interaction with tRNA. Cysteine 201 functions as the Cysteine persulfide intermediate in the catalytic mechanism.

It belongs to the MnmA/TRMU family.

It is found in the cytoplasm. It carries out the reaction S-sulfanyl-L-cysteinyl-[protein] + uridine(34) in tRNA + AH2 + ATP = 2-thiouridine(34) in tRNA + L-cysteinyl-[protein] + A + AMP + diphosphate + H(+). Its function is as follows. Catalyzes the 2-thiolation of uridine at the wobble position (U34) of tRNA, leading to the formation of s(2)U34. This Thermotoga maritima (strain ATCC 43589 / DSM 3109 / JCM 10099 / NBRC 100826 / MSB8) protein is tRNA-specific 2-thiouridylase MnmA.